Reading from the N-terminus, the 94-residue chain is Neutrophil antibiotic peptide NP-2 (94 aa).

The N-terminal stretch at 1-19 is a signal peptide; the sequence is MRTLTLLTALLLLALHTQA. A propeptide spanning residues 20 to 62 is cleaved from the precursor; sequence KSPQGTAEEAPDQEQLVMEDQDISISFGGDKGTALQDADVKAG. Intrachain disulfides connect Cys-65–Cys-93, Cys-67–Cys-82, and Cys-72–Cys-92.

This sequence belongs to the alpha-defensin family. As to expression, highest expression in bone marrow and to a much lesser extent in small intestine.

The protein resides in the secreted. Its function is as follows. Active in vitro against S.aureus, fungi, Gram-positive and Gram-negative bacteria and to a lesser extent against an enveloped virus. This chain is Neutrophil antibiotic peptide NP-2 (Defa), found in Rattus norvegicus (Rat).